Consider the following 130-residue polypeptide: Small ribosomal subunit protein uS8 (130 aa).

This sequence belongs to the universal ribosomal protein uS8 family. Part of the 30S ribosomal subunit. Contacts proteins S5 and S12.

Its function is as follows. One of the primary rRNA binding proteins, it binds directly to 16S rRNA central domain where it helps coordinate assembly of the platform of the 30S subunit. This is Small ribosomal subunit protein uS8 from Pectobacterium atrosepticum (strain SCRI 1043 / ATCC BAA-672) (Erwinia carotovora subsp. atroseptica).